Consider the following 768-residue polypeptide: Cullin-3 (768 aa).

The interval 677-698 (VAAKQGESDPERKETRQKVDDD) is disordered. A compositionally biased stretch (basic and acidic residues) spans 682-698 (GESDPERKETRQKVDDD). The 63-residue stretch at 698 to 760 (DRKHEIEAAI…REYLARTPED (63 aa)) folds into the Cullin neddylation domain. A Glycyl lysine isopeptide (Lys-Gly) (interchain with G-Cter in NEDD8) cross-link involves residue Lys712.

Belongs to the cullin family. Component of multiple BCR (BTB-CUL3-RBX1) E3 ubiquitin-protein ligase complexes formed of cul3, rbx1 and a variable BTB domain-containing protein acting as both, adapter to cullin and substrate recognition subunit. Interacts with btbd6. In terms of processing, neddylated. Attachment of NEDD8 is required for the E3 ubiquitin-protein ligase activity of the SCF-like complex.

It is found in the nucleus. It functions in the pathway protein modification; protein ubiquitination. Its function is as follows. Probable core component of cullin-based SCF-like E3 ubiquitin-protein ligase complexes which mediate the ubiquitination and subsequent proteasomal degradation of target proteins. The E3 ubiquitin-protein ligase activity of the complex is dependent on the neddylation of the cullin subunit. Involved in ER-Golgi transport by regulating the size of COPII coats, thereby playing a key role in collagen export, which is required for embryonic stem (ES) cells division. May play a role in the regulation of mittotic entry via ubiquitination of aurka. The polypeptide is Cullin-3 (cul3) (Xenopus tropicalis (Western clawed frog)).